Here is a 370-residue protein sequence, read N- to C-terminus: Cysteine-type anaerobic sulfatase-maturating enzyme (370 aa).

The 227-residue stretch at 1-227 (MPPLSLLIKP…LKNLFDLWYE (227 aa)) folds into the Radical SAM core domain. Cys15 and Cys19 together coordinate [4Fe-4S] cluster. S-adenosyl-L-methionine is bound at residue Tyr21. Cys22 contacts [4Fe-4S] cluster. 4 residues coordinate S-adenosyl-L-methionine: Gly66, Ser122, Arg134, and Leu195. [4Fe-4S] cluster is bound by residues Cys255, Cys261, and Cys276. Asp277 acts as the Proton acceptor in catalysis. [4Fe-4S] cluster contacts are provided by Cys317, Cys320, Cys326, Cys330, and Cys348.

It belongs to the radical SAM superfamily. Anaerobic sulfatase-maturating enzyme family. Requires [4Fe-4S] cluster as cofactor.

The catalysed reaction is L-cysteinyl-[sulfatase] + S-adenosyl-L-methionine + H2O = 3-oxo-L-alanyl-[sulfatase] + hydrogen sulfide + 5'-deoxyadenosine + L-methionine + 2 H(+). The protein operates within protein modification; sulfatase oxidation. Involved in 'Cys-type' sulfatase maturation under anaerobic conditions. Catalyzes the post-translational modification of cysteine into 3-oxoalanine (also known as C(alpha)-formylglycine (FGly)), by a free radical chemical mechanism initiated via the reductive cleavage of S-adenosyl-L-methionine (SAM). This Clostridium perfringens (strain 13 / Type A) protein is Cysteine-type anaerobic sulfatase-maturating enzyme.